Consider the following 358-residue polypeptide: Carbamoyl phosphate synthase small chain (358 aa).

CPSase stretches follow at residues 1 to 168 and 1 to 171; these read MYNR…PALG and MYNR…GRGR. Positions 46, 220, and 222 each coordinate L-glutamine. In terms of domain architecture, Glutamine amidotransferase type-1 spans 172-358; the sequence is RVVLVDLGMK…FIKNIDNNMK (187 aa). Cysteine 247 acts as the Nucleophile in catalysis. L-glutamine contacts are provided by methionine 248, glutamine 251, asparagine 289, glycine 291, and tyrosine 292. Residues histidine 332 and glutamate 334 contribute to the active site.

It belongs to the CarA family. Composed of two chains; the small (or glutamine) chain promotes the hydrolysis of glutamine to ammonia, which is used by the large (or ammonia) chain to synthesize carbamoyl phosphate. Tetramer of heterodimers (alpha,beta)4.

It catalyses the reaction hydrogencarbonate + L-glutamine + 2 ATP + H2O = carbamoyl phosphate + L-glutamate + 2 ADP + phosphate + 2 H(+). The enzyme catalyses L-glutamine + H2O = L-glutamate + NH4(+). It functions in the pathway amino-acid biosynthesis; L-arginine biosynthesis; carbamoyl phosphate from bicarbonate: step 1/1. The protein operates within pyrimidine metabolism; UMP biosynthesis via de novo pathway; (S)-dihydroorotate from bicarbonate: step 1/3. Functionally, small subunit of the glutamine-dependent carbamoyl phosphate synthetase (CPSase). CPSase catalyzes the formation of carbamoyl phosphate from the ammonia moiety of glutamine, carbonate, and phosphate donated by ATP, constituting the first step of 2 biosynthetic pathways, one leading to arginine and/or urea and the other to pyrimidine nucleotides. The small subunit (glutamine amidotransferase) binds and cleaves glutamine to supply the large subunit with the substrate ammonia. This chain is Carbamoyl phosphate synthase small chain, found in Fusobacterium nucleatum subsp. nucleatum (strain ATCC 25586 / DSM 15643 / BCRC 10681 / CIP 101130 / JCM 8532 / KCTC 2640 / LMG 13131 / VPI 4355).